Here is a 66-residue protein sequence, read N- to C-terminus: Large ribosomal subunit protein bL35 (66 aa).

The protein belongs to the bacterial ribosomal protein bL35 family.

In Treponema pallidum (strain Nichols), this protein is Large ribosomal subunit protein bL35.